Reading from the N-terminus, the 335-residue chain is Glyceraldehyde-3-phosphate dehydrogenase (335 aa).

NAD(+)-binding positions include 13 to 14 (RI), Asp-34, Met-79, and Ser-121. Residues 151–153 (SCT), Thr-182, 211–212 (TG), and Arg-234 each bind D-glyceraldehyde 3-phosphate. Catalysis depends on Cys-152, which acts as the Nucleophile. Cys-152 carries the post-translational modification S-nitrosocysteine. Asn-316 is an NAD(+) binding site.

Belongs to the glyceraldehyde-3-phosphate dehydrogenase family. As to quaternary structure, homotetramer. In terms of processing, S-nitrosylation of Cys-152 leads to translocation to the nucleus.

It localises to the cytoplasm. It is found in the cytosol. The protein localises to the cytoskeleton. The protein resides in the nucleus. It carries out the reaction D-glyceraldehyde 3-phosphate + phosphate + NAD(+) = (2R)-3-phospho-glyceroyl phosphate + NADH + H(+). The enzyme catalyses S-nitroso-L-cysteinyl-[GAPDH] + L-cysteinyl-[protein] = L-cysteinyl-[GAPDH] + S-nitroso-L-cysteinyl-[protein]. Its pathway is carbohydrate degradation; glycolysis; pyruvate from D-glyceraldehyde 3-phosphate: step 1/5. Has both glyceraldehyde-3-phosphate dehydrogenase and nitrosylase activities, thereby playing a role in glycolysis and nuclear functions, respectively. Glyceraldehyde-3-phosphate dehydrogenase is a key enzyme in glycolysis that catalyzes the first step of the pathway by converting D-glyceraldehyde 3-phosphate (G3P) into 3-phospho-D-glyceroyl phosphate. Participates in nuclear events including transcription, RNA transport, DNA replication and apoptosis. Nuclear functions are probably due to the nitrosylase activity that mediates cysteine S-nitrosylation of nuclear target proteins such as SIRT1, HDAC2 and PRKDC. The protein is Glyceraldehyde-3-phosphate dehydrogenase (gapdh) of Oncorhynchus mykiss (Rainbow trout).